A 449-amino-acid polypeptide reads, in one-letter code: Glutamyl-tRNA reductase (449 aa).

Substrate-binding positions include 48 to 51, S99, 104 to 106, and Q110; these read TCNR and EDQ. C49 (nucleophile) is an active-site residue. 179 to 184 is an NADP(+) binding site; the sequence is GAGEIG.

This sequence belongs to the glutamyl-tRNA reductase family. Homodimer.

It carries out the reaction (S)-4-amino-5-oxopentanoate + tRNA(Glu) + NADP(+) = L-glutamyl-tRNA(Glu) + NADPH + H(+). It functions in the pathway porphyrin-containing compound metabolism; protoporphyrin-IX biosynthesis; 5-aminolevulinate from L-glutamyl-tRNA(Glu): step 1/2. Functionally, catalyzes the NADPH-dependent reduction of glutamyl-tRNA(Glu) to glutamate 1-semialdehyde (GSA). The protein is Glutamyl-tRNA reductase of Methanosarcina barkeri (strain Fusaro / DSM 804).